The sequence spans 443 residues: Xaa-Pro dipeptidase (443 aa).

Mn(2+)-binding residues include aspartate 246, aspartate 257, histidine 339, glutamate 384, and glutamate 423.

Belongs to the peptidase M24B family. Bacterial-type prolidase subfamily. Mn(2+) serves as cofactor.

It carries out the reaction Xaa-L-Pro dipeptide + H2O = an L-alpha-amino acid + L-proline. In terms of biological role, splits dipeptides with a prolyl residue in the C-terminal position. This chain is Xaa-Pro dipeptidase, found in Escherichia coli (strain SMS-3-5 / SECEC).